Consider the following 174-residue polypeptide: Shikimate kinase 2 (174 aa).

Residue 12 to 17 coordinates ATP; sequence GAGKTT. Threonine 16 and aspartate 32 together coordinate Mg(2+). Aspartate 34, arginine 58, and glycine 79 together coordinate substrate. The interval 112–126 is LID domain; the sequence is EEYPQDTQRPTLTGR. Arginine 120 contacts ATP. Residue arginine 139 participates in substrate binding.

The protein belongs to the shikimate kinase family. AroL subfamily. As to quaternary structure, monomer. Mg(2+) serves as cofactor.

The protein resides in the cytoplasm. It carries out the reaction shikimate + ATP = 3-phosphoshikimate + ADP + H(+). Its pathway is metabolic intermediate biosynthesis; chorismate biosynthesis; chorismate from D-erythrose 4-phosphate and phosphoenolpyruvate: step 5/7. In terms of biological role, catalyzes the specific phosphorylation of the 3-hydroxyl group of shikimic acid using ATP as a cosubstrate. In Serratia proteamaculans (strain 568), this protein is Shikimate kinase 2.